The following is a 284-amino-acid chain: Tropomyosin (284 aa).

A coiled-coil region spans residues 1-284 (MDAIKKKMQA…DQTFQELSGY (284 aa)). The segment covering 110–142 (TAKLEEATHTADESERVRKVMENRSFQDEERAN) has biased composition (basic and acidic residues). Residues 110–143 (TAKLEEATHTADESERVRKVMENRSFQDEERANT) are disordered.

The protein belongs to the tropomyosin family.

Tropomyosin, in association with the troponin complex, plays a central role in the calcium dependent regulation of muscle contraction. The protein is Tropomyosin of Anisakis simplex (Herring worm).